The primary structure comprises 296 residues: Small ribosomal subunit protein uS2 (296 aa).

The segment at 245–296 (WEAPAAGFAGATGTGWDGAAGDEWGAAPATTEWAASAAPAAASGEAAKETTW) is disordered. Residues 263–289 (AAGDEWGAAPATTEWAASAAPAAASGE) are compositionally biased toward low complexity.

The protein belongs to the universal ribosomal protein uS2 family. Component of the small ribosomal subunit. Mature ribosomes consist of a small (40S) and a large (60S) subunit. The 40S subunit contains about 33 different proteins and 1 molecule of RNA (18S). The 60S subunit contains about 49 different proteins and 3 molecules of RNA (25S, 5.8S and 5S). Interacts with RPS21.

The protein localises to the cytoplasm. In terms of biological role, required for the assembly and/or stability of the 40S ribosomal subunit. Required for the processing of the 20S rRNA-precursor to mature 18S rRNA in a late step of the maturation of 40S ribosomal subunits. The chain is Small ribosomal subunit protein uS2 from Fusarium vanettenii (strain ATCC MYA-4622 / CBS 123669 / FGSC 9596 / NRRL 45880 / 77-13-4) (Fusarium solani subsp. pisi).